Here is a 358-residue protein sequence, read N- to C-terminus: Replication factor C subunit 5 (358 aa).

Belongs to the activator 1 small subunits family. Heteropentamer of subunits rfc1, rfc2, rfc3, rfc4 and rfc5 that forms a complex (RFC) with PCNA in the presence of ATP. Two other complexes exist where rfc1 can be replaced by either ctf18 or elg1 to form the ctf18-RFC or the elg1-RFC complexes respectively.

It is found in the nucleus. The elongation of primed DNA templates by DNA polymerase delta and epsilon requires the action of the accessory proteins PCNA and activator 1. The protein is Replication factor C subunit 5 (rfc5) of Schizosaccharomyces pombe (strain 972 / ATCC 24843) (Fission yeast).